The sequence spans 85 residues: Actobindin homolog (85 aa).

Residues 35–52 form the WH2 domain; sequence DRNELLSGIKEGKELKKA.

Is able to bind two actin monomers at high concentrations of G-actin. This is Actobindin homolog from Entamoeba histolytica.